Here is a 417-residue protein sequence, read N- to C-terminus: Argininosuccinate synthase (417 aa).

8–16 (AYSGGLDTS) is an ATP binding site. An L-citrulline-binding site is contributed by Tyr-87. Gly-117 lines the ATP pocket. Residues Thr-119, Asn-123, and Asp-124 each coordinate L-aspartate. Asn-123 contacts L-citrulline. L-citrulline is bound by residues Arg-127, Ser-175, Glu-259, and Tyr-271.

The protein belongs to the argininosuccinate synthase family. Type 1 subfamily. As to quaternary structure, homotetramer.

The protein localises to the cytoplasm. It carries out the reaction L-citrulline + L-aspartate + ATP = 2-(N(omega)-L-arginino)succinate + AMP + diphosphate + H(+). Its pathway is amino-acid biosynthesis; L-arginine biosynthesis; L-arginine from L-ornithine and carbamoyl phosphate: step 2/3. This is Argininosuccinate synthase from Clavibacter sepedonicus (Clavibacter michiganensis subsp. sepedonicus).